A 112-amino-acid chain; its full sequence is Mitochondrial import inner membrane translocase subunit TIM14-2 (112 aa).

A helical membrane pass occupies residues 7-25 (AGAAVAAAAYAGKYGIEAW). Residues 53–112 (EAALILGVRESVAAEKVKEAHRRVMVANHPDAGGSHYLASKINEAKDMMLGKTKNSGSAF) form the J domain.

Belongs to the TIM14 family. As to quaternary structure, probable component of the PAM complex at least composed of a mitochondrial HSP70 protein, TIMM44 and TIMM14. The complex interacts with the TIMM23 component of the TIM17:23 complex.

It localises to the mitochondrion. The protein localises to the mitochondrion inner membrane. Component of the PAM complex, a complex required for the translocation of transit peptide-containing proteins from the inner membrane into the mitochondrial matrix in an ATP-dependent manner. This Arabidopsis thaliana (Mouse-ear cress) protein is Mitochondrial import inner membrane translocase subunit TIM14-2 (TIM14-2).